A 555-amino-acid polypeptide reads, in one-letter code: MRSDMIKKGIDRAPHRSLLRAAGVKEEEMDKPFIGVCNSYIDIIPGHMHLNKFAEVAKEAIREAGGIPFEFNTIGVDDGIAMGHIGMRYSLPSREIICDAAETVINAHWFDGVFFIPNCDKITPGMLMASVRTNVPSVFVSGGPMEAGRTKDGKNLSLASVFEGVGAFSSGKMTREELLEIEQTACPTCGSCSGMFTANSMNSLMEMLGMALPGNGTIVATSEARHQLIKDAAKHLMNLIEKDIRPRDIITKETIDDAFALDMAMGGSTNTVLHTLAIANEAEIEYDLNRINEVAERVPYLCKISPASDYSMDDVHHAGGVAAIIKELCEIDGAIHPDRITITGKSIYENVKDAEITDDVVIRRKDNPYSPVGGLSILFGNLAPNGAVIKVGAVDPSIQIFEGEAIVYNSQEEAQQGINNGDVREGHVVVIRYEGPKGGPGMPEMLAPTSAIIGRGLGTKVALITDGRFSGASRGISIGHISPEAAEGGPIAFIENGDKIRIDLPNRTIEWLVSDEEIAKRQEGWTEPEPKVKKGYLARYSKLVTSANTGGVMKI.

Asp-78 lines the Mg(2+) pocket. [2Fe-2S] cluster is bound at residue Cys-119. Asp-120 and Lys-121 together coordinate Mg(2+). Lys-121 carries the N6-carboxylysine modification. Position 192 (Cys-192) interacts with [2Fe-2S] cluster. Glu-444 contributes to the Mg(2+) binding site. The Proton acceptor role is filled by Ser-470.

It belongs to the IlvD/Edd family. As to quaternary structure, homodimer. [2Fe-2S] cluster serves as cofactor. It depends on Mg(2+) as a cofactor.

The catalysed reaction is (2R)-2,3-dihydroxy-3-methylbutanoate = 3-methyl-2-oxobutanoate + H2O. It catalyses the reaction (2R,3R)-2,3-dihydroxy-3-methylpentanoate = (S)-3-methyl-2-oxopentanoate + H2O. It functions in the pathway amino-acid biosynthesis; L-isoleucine biosynthesis; L-isoleucine from 2-oxobutanoate: step 3/4. It participates in amino-acid biosynthesis; L-valine biosynthesis; L-valine from pyruvate: step 3/4. Functions in the biosynthesis of branched-chain amino acids. Catalyzes the dehydration of (2R,3R)-2,3-dihydroxy-3-methylpentanoate (2,3-dihydroxy-3-methylvalerate) into 2-oxo-3-methylpentanoate (2-oxo-3-methylvalerate) and of (2R)-2,3-dihydroxy-3-methylbutanoate (2,3-dihydroxyisovalerate) into 2-oxo-3-methylbutanoate (2-oxoisovalerate), the penultimate precursor to L-isoleucine and L-valine, respectively. In Halalkalibacterium halodurans (strain ATCC BAA-125 / DSM 18197 / FERM 7344 / JCM 9153 / C-125) (Bacillus halodurans), this protein is Dihydroxy-acid dehydratase.